A 1384-amino-acid chain; its full sequence is MKAPAVLAPGILVLLFTFVQKSNGECKEALVKSRMNVNMQYQLPNFTAETSIRNVVLHKHHIYLGAINYIYVLNDKDLQKVAEYKTGPVLEHPDCFPCQDCSHKANLSGGVWKDNINMALLVDTYYDDQLISCGSVHRGTCQRHVLPPNNTADIESEVHCMYSPQEDEETNQCPDCVVSALGTKVLLSEKERFINFFVGNTINSSYFPDHSLHSISVRRLKETQDGFKFLTDQSYIDVLPELQDSYPIKYVHAFESNHFIYFLTVQRETLDAQTFHTRIIRFCSADSGLHSYMEMPLECILTEKRRKRSTKQEVFNILQAAYVSKPGAQLARQIGANLNDDILYGVFAQSKPDSSEPMNRSAVCAFPVKYVNEFFNKIVNKNNVRCLQHFYGPNHEHCFNRTLLRNSSGCEVRNDEYRTEFTTALPRIDLFMGQFNQVLLTSISTFIKGDLTIANLGTSEGRFMQVVVSRSGSLTPHVNFPLDSHPVSPEVVVEHPLNQNGYTLVVTGKKITKIPLNGLGCEHFQSCSQCLSAPSFVQCGWCHDKCVRLEECPSGRWTQETCLPTIYKVFPTSAPLEGGTTLTVCGWDFGFKRNNKFDLKKTRVLLGNESCTLTLSESTTNMLKCTVGPATNEHFNMSIVISNSRGSVQYSMFSYVDPIITSISPNYGPKTGGTLLTLTGKHLNSGNSRHISIGGKTCTLKSVSYSILECYTPAQSAPTEFSVKLKIDLANREVNSFIYREDPIVYEIHPTKSFISGGSTITGVGKNLNSVSIIRMVINVHEAGKNFTVACQHRSNSEIICCTTPSLQQLNLQLPLKTKAFFMLDGIHSKYFDLIYVHNPVFKPFEKPVMISIGNENVLEIKGNDIDPEAVKGEVLKVGNKSCENIQSHSEAVLCTVPNDLLKLNSELNIEWKQAISSTVLGKVIVQPDQNFTGLIVGVVSVSIILLLLLGLFLWLKKRKQIKDLGSELVRYDARVHTPHLDRLVSARSVSPTTEMVSNESVDYRATFPEDQFPNSSQNGSCRQVQYPLTDLSPILTSGDSDISSPLLQNTVHIDLSALNPELVQAVQHVVIGPSSLIVHFNEVIGRGHFGCVYHGTLLDNDDKKIHCAVKSLNRITDIGEVSQFLTEGIIMKDFSHPNVLSLLGICLRSEGSPLVVLPYMKHGDLRNFIRNETHNPTVKDLIGFGLQVAKGMEYLASKKFVHRDLAARNCMLDEKFTVKVADFGLARDVYDKEYYSVHNKTGAKLPVKWMALESLQTQKFTTKSDVWSFGVLLWELMTRGAPPYPDVNTFDITVYLLQGRRLLQPEYCPDPLYEVMLKCWHPKAELRPSFSELVSRIAAIFSAFIGEHYVHVNATYVNVRCVAPYPSLLSSQENVSGEDDDDT.

The N-terminal stretch at 1–24 is a signal peptide; that stretch reads MKAPAVLAPGILVLLFTFVQKSNG. Residues 25-933 lie on the Extracellular side of the membrane; that stretch reads ECKEALVKSR…VIVQPDQNFT (909 aa). In terms of domain architecture, Sema spans 27-516; it reads KEALVKSRMN…TGKKITKIPL (490 aa). Asparagine 45 carries N-linked (GlcNAc...) asparagine glycosylation. Disulfide bonds link cysteine 95/cysteine 101, cysteine 98/cysteine 160, cysteine 133/cysteine 141, and cysteine 173/cysteine 176. Asparagine 106 is a glycosylation site (N-linked (GlcNAc...) asparagine). Asparagine 149 carries an N-linked (GlcNAc...) asparagine glycan. 2 N-linked (GlcNAc...) asparagine glycosylation sites follow: asparagine 203 and asparagine 359. Disulfide bonds link cysteine 299-cysteine 364 and cysteine 386-cysteine 398. Asparagine 400 and asparagine 406 each carry an N-linked (GlcNAc...) asparagine glycan. Intrachain disulfides connect cysteine 521–cysteine 539, cysteine 527–cysteine 562, cysteine 530–cysteine 546, and cysteine 542–cysteine 552. 3 consecutive IPT/TIG domains span residues 564-656, 658-740, and 743-837; these read PTIY…FSYV, PIIT…FIYR, and PIVY…LIYV. A glycan (O-linked (Man) threonine) is linked at threonine 583. Asparagine 608 and asparagine 636 each carry an N-linked (GlcNAc...) asparagine glycan. O-linked (Man) threonine glycosylation is found at threonine 677 and threonine 762. N-linked (GlcNAc...) asparagine glycosylation is found at asparagine 786, asparagine 880, and asparagine 931. The helical transmembrane segment at 934–956 threads the bilayer; that stretch reads GLIVGVVSVSIILLLLLGLFLWL. At 957–1384 the chain is on the cytoplasmic side; the sequence is KKRKQIKDLG…NVSGEDDDDT (428 aa). The residue at position 967 (serine 967) is a Phosphoserine. The residue at position 978 (threonine 978) is a Phosphothreonine. A phosphoserine mark is found at serine 991, serine 998, and serine 1001. At tyrosine 1004 the chain carries Phosphotyrosine. Residues 1079–1346 enclose the Protein kinase domain; sequence VHFNEVIGRG…RIAAIFSAFI (268 aa). ATP contacts are provided by residues 1085–1093 and lysine 1111; that span reads IGRGHFGCV. Catalysis depends on aspartate 1205, which acts as the Proton acceptor. Residues 1213-1382 are interaction with RANBP9; it reads LDEKFTVKVA…QENVSGEDDD (170 aa). Tyrosine 1231 is modified (phosphotyrosine). Tyrosine 1235 and tyrosine 1236 each carry phosphotyrosine; by autocatalysis. Position 1290 is a phosphothreonine (threonine 1290). The interval 1321-1360 is interaction with MUC20; that stretch reads WHPKAELRPSFSELVSRIAAIFSAFIGEHYVHVNATYVNV. 2 positions are modified to phosphotyrosine; by autocatalysis: tyrosine 1350 and tyrosine 1357. Tyrosine 1366 is subject to Phosphotyrosine.

Belongs to the protein kinase superfamily. Tyr protein kinase family. As to quaternary structure, heterodimer made of an alpha chain (50 kDa) and a beta chain (145 kDa) which are disulfide linked. Binds PLXNB1. Interacts when phosphorylated with downstream effectors including STAT3, PIK3R1, SRC, PCLG1, GRB2 and GAB1. Interacts with SPSB1, SPSB2 and SPSB4. Interacts with INPP5D/SHIP1. When phosphorylated at Tyr-1357, interacts with INPPL1/SHIP2. Interacts with RANBP9 and RANBP10, as well as SPSB1, SPSB2, SPSB3 and SPSB4. SPSB1 binding occurs in the presence and in the absence of HGF, however HGF treatment has a positive effect on this interaction. Interacts with MUC20; prevents interaction with GRB2 and suppresses hepatocyte growth factor-induced cell proliferation. Interacts with GRB10. Interacts with PTPN1 and PTPN2. Interacts with HSP90AA1 and HSP90AB1; the interaction suppresses MET kinase activity. Interacts with tensin TNS3. Interacts (when phosphorylated) with tensin TNS4 (via SH2 domain); the interaction increases MET protein stability by inhibiting MET endocytosis and subsequent lysosomal degradation. In terms of processing, autophosphorylated in response to ligand binding on Tyr-1235 and Tyr-1236 in the kinase domain leading to further phosphorylation of Tyr-1350 and Tyr-1357 in the C-terminal multifunctional docking site. Dephosphorylated by PTPRJ at Tyr-1350 and Tyr-1366. Dephosphorylated by PTPN1 and PTPN2. Ubiquitinated. Ubiquitination by CBL regulates the receptor stability and activity through proteasomal degradation. Post-translationally, O-mannosylation of IPT/TIG domains by TMEM260 is required for protein maturation. O-mannosylated residues are composed of single mannose glycans that are not elongated or modified.

The protein localises to the membrane. The enzyme catalyses L-tyrosyl-[protein] + ATP = O-phospho-L-tyrosyl-[protein] + ADP + H(+). In its inactive state, the C-terminal tail interacts with the catalytic domain and inhibits the kinase activity. Upon ligand binding, the C-terminal tail is displaced and becomes phosphorylated, thus increasing the kinase activity. Functionally, receptor tyrosine kinase that transduces signals from the extracellular matrix into the cytoplasm by binding to hepatocyte growth factor/HGF ligand. Regulates many physiological processes including proliferation, scattering, morphogenesis and survival. Ligand binding at the cell surface induces autophosphorylation of MET on its intracellular domain that provides docking sites for downstream signaling molecules. Following activation by ligand, interacts with the PI3-kinase subunit PIK3R1, PLCG1, SRC, GRB2, STAT3 or the adapter GAB1. Recruitment of these downstream effectors by MET leads to the activation of several signaling cascades including the RAS-ERK, PI3 kinase-AKT, or PLCgamma-PKC. The RAS-ERK activation is associated with the morphogenetic effects while PI3K/AKT coordinates prosurvival effects. During embryonic development, MET signaling plays a role in gastrulation, development and migration of muscles and neuronal precursors, angiogenesis and kidney formation. In adults, participates in wound healing as well as organ regeneration and tissue remodeling. Also promotes differentiation and proliferation of hematopoietic cells. In Ovis aries (Sheep), this protein is Hepatocyte growth factor receptor (MET).